The primary structure comprises 452 residues: Tol-Pal system protein TolB (452 aa).

The N-terminal stretch at 1–31 (MCGVRRGMGVLLLFCAVALCAMPFVVRSVWG) is a signal peptide.

This sequence belongs to the TolB family. In terms of assembly, the Tol-Pal system is composed of five core proteins: the inner membrane proteins TolA, TolQ and TolR, the periplasmic protein TolB and the outer membrane protein Pal. They form a network linking the inner and outer membranes and the peptidoglycan layer.

The protein localises to the periplasm. Part of the Tol-Pal system, which plays a role in outer membrane invagination during cell division and is important for maintaining outer membrane integrity. The sequence is that of Tol-Pal system protein TolB from Syntrophus aciditrophicus (strain SB).